The chain runs to 569 residues: 3-(3-hydroxy-phenyl)propionate/3-hydroxycinnamic acid hydroxylase (569 aa).

FAD-binding positions include 12-41 and 277-287; these read DVVV…VVDE and FRKGRLMLAGD.

This sequence belongs to the PheA/TfdB FAD monooxygenase family. It depends on FAD as a cofactor.

It carries out the reaction 3-(3-hydroxyphenyl)propanoate + NADH + O2 + H(+) = 3-(2,3-dihydroxyphenyl)propanoate + NAD(+) + H2O. It catalyses the reaction (2E)-3-(3-hydroxyphenyl)prop-2-enoate + NADH + O2 + H(+) = (2E)-3-(2,3-dihydroxyphenyl)prop-2-enoate + NAD(+) + H2O. The protein operates within aromatic compound metabolism; 3-phenylpropanoate degradation. Catalyzes the insertion of one atom of molecular oxygen into position 2 of the phenyl ring of 3-(3-hydroxyphenyl)propionate (3-HPP) and hydroxycinnamic acid (3HCI). This chain is 3-(3-hydroxy-phenyl)propionate/3-hydroxycinnamic acid hydroxylase, found in Mycolicibacterium vanbaalenii (strain DSM 7251 / JCM 13017 / BCRC 16820 / KCTC 9966 / NRRL B-24157 / PYR-1) (Mycobacterium vanbaalenii).